The following is a 421-amino-acid chain: Medium-chain specific acyl-CoA dehydrogenase, mitochondrial (421 aa).

The N-terminal 25 residues, 1–25 (MAAAFGRCCRVLRSISRFHWRSQHT), are a transit peptide targeting the mitochondrion. N6-acetyllysine; alternate is present on Lys-69. Lys-69 carries the N6-succinyllysine; alternate modification. Residue 158 to 167 (YCVTEPGAGS) coordinates FAD. Ser-167 lines the octanoyl-CoA pocket. The residue at position 179 (Lys-179) is an N6-succinyllysine. 191–193 (WIT) provides a ligand contact to FAD. N6-acetyllysine; alternate occurs at positions 212, 217, 259, and 271. N6-succinyllysine; alternate is present on residues Lys-212, Lys-217, Lys-259, and Lys-271. Asp-278 is an octanoyl-CoA binding site. At Lys-279 the chain carries N6-acetyllysine. Residue Arg-281 participates in octanoyl-CoA binding. Residue Lys-301 is modified to N6-acetyllysine. FAD-binding positions include 306-308 (RKT) and 316-317 (HQ). Positions 349 and 351 each coordinate octanoyl-CoA. Residue Thr-351 is modified to Phosphothreonine. 374–378 (QIFGG) lines the FAD pocket. Glu-401 is an octanoyl-CoA binding site. The Proton acceptor role is filled by Glu-401. Residue 402-405 (GTSQ) coordinates FAD.

Belongs to the acyl-CoA dehydrogenase family. As to quaternary structure, homotetramer. Interacts with the heterodimeric electron transfer flavoprotein ETF. It depends on FAD as a cofactor. Post-translationally, acetylated. Could occur at proximity of the cofactor-binding sites and reduce the catalytic activity. Could be deacetylated by SIRT3.

The protein resides in the mitochondrion matrix. It catalyses the reaction a medium-chain 2,3-saturated fatty acyl-CoA + oxidized [electron-transfer flavoprotein] + H(+) = a medium-chain (2E)-enoyl-CoA + reduced [electron-transfer flavoprotein]. The catalysed reaction is pentanoyl-CoA + oxidized [electron-transfer flavoprotein] + H(+) = (2E)-pentenoyl-CoA + reduced [electron-transfer flavoprotein]. It carries out the reaction hexanoyl-CoA + oxidized [electron-transfer flavoprotein] + H(+) = (2E)-hexenoyl-CoA + reduced [electron-transfer flavoprotein]. The enzyme catalyses octanoyl-CoA + oxidized [electron-transfer flavoprotein] + H(+) = (2E)-octenoyl-CoA + reduced [electron-transfer flavoprotein]. It catalyses the reaction decanoyl-CoA + oxidized [electron-transfer flavoprotein] + H(+) = (2E)-decenoyl-CoA + reduced [electron-transfer flavoprotein]. The catalysed reaction is dodecanoyl-CoA + oxidized [electron-transfer flavoprotein] + H(+) = (2E)-dodecenoyl-CoA + reduced [electron-transfer flavoprotein]. It carries out the reaction tetradecanoyl-CoA + oxidized [electron-transfer flavoprotein] + H(+) = (2E)-tetradecenoyl-CoA + reduced [electron-transfer flavoprotein]. The enzyme catalyses oxidized [electron-transfer flavoprotein] + hexadecanoyl-CoA + H(+) = (2E)-hexadecenoyl-CoA + reduced [electron-transfer flavoprotein]. It functions in the pathway lipid metabolism; mitochondrial fatty acid beta-oxidation. In terms of biological role, medium-chain specific acyl-CoA dehydrogenase is one of the acyl-CoA dehydrogenases that catalyze the first step of mitochondrial fatty acid beta-oxidation, an aerobic process breaking down fatty acids into acetyl-CoA and allowing the production of energy from fats. The first step of fatty acid beta-oxidation consists in the removal of one hydrogen from C-2 and C-3 of the straight-chain fatty acyl-CoA thioester, resulting in the formation of trans-2-enoyl-CoA. Electron transfer flavoprotein (ETF) is the electron acceptor that transfers electrons to the main mitochondrial respiratory chain via ETF-ubiquinone oxidoreductase (ETF dehydrogenase). Among the different mitochondrial acyl-CoA dehydrogenases, medium-chain specific acyl-CoA dehydrogenase acts specifically on acyl-CoAs with saturated 6 to 12 carbons long primary chains. The polypeptide is Medium-chain specific acyl-CoA dehydrogenase, mitochondrial (Macaca fascicularis (Crab-eating macaque)).